A 196-amino-acid polypeptide reads, in one-letter code: SAGA-associated factor 11 homolog (196 aa).

A disordered region spans residues 1-22 (MSAANMPTTTGAQGSGNQVPTT). The segment at 106–127 (CTCPNCDRLVAAARFAPHLEKC) adopts an SGF11-type zinc-finger fold. A disordered region spans residues 144–196 (TKEGATSAHLHSAGNTGGTDDEDDVDWSSDKRRKKSNQNSRNNGSKKNNGKSF). Ser-172 carries the phosphoserine modification. Residues 180–196 (NQNSRNNGSKKNNGKSF) are compositionally biased toward low complexity.

The protein belongs to the SGF11 family. As to quaternary structure, component of some SAGA transcription coactivator-HAT complexes, at least composed of Ada2b, not/nonstop, Pcaf/Gcn5, Sgf11 and Spt3. Within the SAGA complex, Sgf11, e(y)2, and not/nonstop form an additional subcomplex of SAGA called the DUB module (deubiquitination module). Interacts directly with not/nonstop. Interacts with the AMEX complex component xmas-2. Interacts with Cbp80; important for promoter recruitment of Sgf11 that is not associated with the DUB module.

The protein localises to the nucleus. Its subcellular location is the nucleoplasm. It is found in the cytoplasm. In terms of biological role, component of the transcription regulatory histone acetylation (HAT) complex SAGA, a multiprotein complex that activates transcription by remodeling chromatin and mediating histone acetylation and deubiquitination. Within the SAGA complex, participates in a subcomplex that specifically deubiquitinates histone H2B. The SAGA complex is recruited to specific gene promoters by activators, where it is required for transcription. Required for nuclear receptor-mediated transactivation. Binds independently on SAGA to promoters in an RNA-dependent manner. Binds to mRNA and is essential for total mRNA export from the nucleus. Required to counteract heterochromatin silencing. Controls the development of neuronal connectivity in visual system by being required for accurate axon targeting in the optic lobe. Required for expression of ecdysone-induced genes such as br/broad. The chain is SAGA-associated factor 11 homolog from Drosophila erecta (Fruit fly).